The primary structure comprises 98 residues: Alpha-elicitin hibernalin (98 aa).

Disulfide bonds link C3-C71, C27-C56, and C51-C95.

It localises to the secreted. Induces local and distal defense responses (incompatible hypersensitive reaction) in plants from the solanaceae and cruciferae families. Elicits leaf necrosis and causes the accumulation of pathogenesis-related proteins. Might interact with the lipidic molecules of the plasma membrane. This Phytophthora hibernalis protein is Alpha-elicitin hibernalin.